Here is a 256-residue protein sequence, read N- to C-terminus: Glutamate racemase (256 aa).

Substrate-binding positions include 11-12 (DS) and 43-44 (YG). Cys74 serves as the catalytic Proton donor/acceptor. 75 to 76 (NT) is a substrate binding site. Cys182 serves as the catalytic Proton donor/acceptor. Position 183–184 (183–184 (TH)) interacts with substrate.

It belongs to the aspartate/glutamate racemases family.

It catalyses the reaction L-glutamate = D-glutamate. The protein operates within cell wall biogenesis; peptidoglycan biosynthesis. Provides the (R)-glutamate required for cell wall biosynthesis. The polypeptide is Glutamate racemase (Leptospira interrogans serogroup Icterohaemorrhagiae serovar copenhageni (strain Fiocruz L1-130)).